The following is a 134-amino-acid chain: Large ribosomal subunit protein bL20 (134 aa).

This sequence belongs to the bacterial ribosomal protein bL20 family.

Functionally, binds directly to 23S ribosomal RNA and is necessary for the in vitro assembly process of the 50S ribosomal subunit. It is not involved in the protein synthesizing functions of that subunit. The protein is Large ribosomal subunit protein bL20 of Brucella anthropi (strain ATCC 49188 / DSM 6882 / CCUG 24695 / JCM 21032 / LMG 3331 / NBRC 15819 / NCTC 12168 / Alc 37) (Ochrobactrum anthropi).